The chain runs to 200 residues: Small ribosomal subunit protein uS4 (200 aa).

Residues 1–43 form a disordered region; the sequence is MARYTGPRGRRDRRAGVMLSSMRKNPLEKKPYPPGEHGRDRQR. The span at 25 to 43 shows a compositional bias: basic and acidic residues; that stretch reads NPLEKKPYPPGEHGRDRQR. Residues 92 to 158 form the S4 RNA-binding domain; it reads LRMDNVVYRM…QPIQEAVEQV (67 aa).

Belongs to the universal ribosomal protein uS4 family. As to quaternary structure, part of the 30S ribosomal subunit. Contacts protein S5. The interaction surface between S4 and S5 is involved in control of translational fidelity.

Its function is as follows. One of the primary rRNA binding proteins, it binds directly to 16S rRNA where it nucleates assembly of the body of the 30S subunit. In terms of biological role, with S5 and S12 plays an important role in translational accuracy. In Rubrobacter xylanophilus (strain DSM 9941 / JCM 11954 / NBRC 16129 / PRD-1), this protein is Small ribosomal subunit protein uS4.